A 35-amino-acid polypeptide reads, in one-letter code: Cupiennin-1d (35 aa).

Glu-35 is subject to Glutamic acid 1-amide.

This sequence belongs to the cationic peptide 04 (cupiennin) family. 01 subfamily. Expressed by the venom gland.

It localises to the secreted. In terms of biological role, has antimicrobial activity against B.subtilis, E.coli, E.faecalis, P.aeruginosa, and S.aureus. Has insecticidal and hemolytic activities. Probably acts by disturbing membrane function with its amphipathic structure. The protein is Cupiennin-1d of Cupiennius salei (American wandering spider).